We begin with the raw amino-acid sequence, 167 residues long: Cofilin-2 (167 aa).

Residues Gly-4 to Leu-153 form the ADF-H domain. The short motif at Lys-30–Lys-34 is the Nuclear localization signal element.

This sequence belongs to the actin-binding proteins ADF family.

The protein resides in the nucleus matrix. Its subcellular location is the cytoplasm. It localises to the cytoskeleton. In terms of biological role, controls reversibly actin polymerization and depolymerization in a pH-sensitive manner. It has the ability to bind G- and F-actin in a 1:1 ratio of cofilin to actin. It is the major component of intranuclear and cytoplasmic actin rods. The protein is Cofilin-2 (cfl2) of Xenopus tropicalis (Western clawed frog).